The sequence spans 427 residues: Mitogen-activated protein kinase 8 (427 aa).

The Protein kinase domain occupies 26–321 (YQNLKPIGSG…VDEALQHPYI (296 aa)). Residues 32–40 (IGSGAQGIV) and Lys-55 each bind ATP. Cys-116 carries the S-nitrosocysteine modification. Catalysis depends on Asp-151, which acts as the Proton acceptor. Thr-183 is modified (phosphothreonine; by MAP2K7). Residues 183-185 (TPY) carry the TXY motif. Phosphotyrosine; by MAP2K4 is present on Tyr-185. Phosphoserine is present on residues Met-301 and Ser-377. Residues 371–427 (VIRGQPSPLGAAVINGSQHPSSSSSVNDVSSMSTDPTLASDTDSSLEAAAGPLGCCR) form a disordered region. Residues 387–403 (SQHPSSSSSVNDVSSMS) are compositionally biased toward low complexity. Polar residues predominate over residues 404–415 (TDPTLASDTDSS).

The protein belongs to the protein kinase superfamily. CMGC Ser/Thr protein kinase family. MAP kinase subfamily. In terms of assembly, forms a complex with MAPK8IP1 and ARHGEF28. Found in a complex with SH3RF1, RAC1, MAP3K11/MLK3, MAP2K7/MKK7 and MAPK8IP1/JIP1. Found in a complex with SH3RF1, RAC2, MAP3K7/TAK1, MAP2K7/MKK7, MAPK8IP1/JIP1 and MAPK9/JNK2. Binds to at least four scaffolding proteins, MAPK8IP1/JIP-1, MAPK8IP2/JIP-2, MAPK8IP3/JIP-3/JSAP1 and SPAG9/MAPK8IP4/JIP-4. These proteins also bind other components of the JNK signaling pathway. Interacts with TP53 and WWOX. Interacts with JAMP. Interacts with HSF1 (via D domain and preferentially with hyperphosphorylated form); this interaction occurs under both normal growth conditions and immediately upon heat shock. Interacts (phosphorylated form) with NFE2; the interaction phosphorylates NFE2 in undifferentiated cells. Interacts with NFATC4. Interacts with MECOM; regulates JNK signaling. Interacts with PIN1; this interaction mediates MAPK8 conformational changes leading to the binding of MAPK8 to its substrates. Interacts with GRIPAP1. Interacts with POU5F1; phosphorylates POU5F1 at 'Ser-355'. Interacts with STMN2, STMN3 and STMN4. Interacts with HSF4. The cofactor is Mg(2+). Post-translationally, dually phosphorylated on Thr-183 and Tyr-185 by MAP2K7 and MAP2K4, which activates the enzyme. Phosphorylated by TAOK2. May be phosphorylated at Thr-183 and Tyr-185 by MAP3K1/MEKK1. Phosphorylated form is more concentrated at synapses than none-phosphorylated.

The protein resides in the cytoplasm. It is found in the nucleus. It localises to the synapse. The enzyme catalyses L-seryl-[protein] + ATP = O-phospho-L-seryl-[protein] + ADP + H(+). The catalysed reaction is L-threonyl-[protein] + ATP = O-phospho-L-threonyl-[protein] + ADP + H(+). With respect to regulation, activated by threonine and tyrosine phosphorylation by either of two dual specificity kinases, MAP2K4 and MAP2K7. MAP2K4 shows a strong preference for Tyr-185 while MAP2K7 phosphorylates Tyr-183 preferentially. Inhibited by dual specificity phosphatases, such as DUSP1. Inhibited by SERPINB3. Its function is as follows. Serine/threonine-protein kinase involved in various processes such as cell proliferation, differentiation, migration, transformation and programmed cell death. Extracellular stimuli such as pro-inflammatory cytokines or physical stress stimulate the stress-activated protein kinase/c-Jun N-terminal kinase (SAP/JNK) signaling pathway. In this cascade, two dual specificity kinases MAP2K4/MKK4 and MAP2K7/MKK7 phosphorylate and activate MAPK8/JNK1. In turn, MAPK8/JNK1 phosphorylates a number of transcription factors, primarily components of AP-1 such as JUN, JDP2 and ATF2 and thus regulates AP-1 transcriptional activity. Phosphorylates the replication licensing factor CDT1, inhibiting the interaction between CDT1 and the histone H4 acetylase HBO1 to replication origins. Loss of this interaction abrogates the acetylation required for replication initiation. Promotes stressed cell apoptosis by phosphorylating key regulatory factors including p53/TP53 and Yes-associates protein YAP1. In T-cells, MAPK8 and MAPK9 are required for polarized differentiation of T-helper cells into Th1 cells. Contributes to the survival of erythroid cells by phosphorylating the antagonist of cell death BAD upon EPO stimulation. Mediates starvation-induced BCL2 phosphorylation, BCL2 dissociation from BECN1, and thus activation of autophagy. Phosphorylates STMN2 and hence regulates microtubule dynamics, controlling neurite elongation in cortical neurons. In the developing brain, through its cytoplasmic activity on STMN2, negatively regulates the rate of exit from multipolar stage and of radial migration from the ventricular zone. Phosphorylates several other substrates including heat shock factor protein 4 (HSF4), the deacetylase SIRT1, ELK1, or the E3 ligase ITCH. Phosphorylates the CLOCK-BMAL1 heterodimer and plays a role in the regulation of the circadian clock. Phosphorylates the heat shock transcription factor HSF1, suppressing HSF1-induced transcriptional activity. Phosphorylates POU5F1, which results in the inhibition of POU5F1's transcriptional activity and enhances its proteasomal degradation. Phosphorylates JUND and this phosphorylation is inhibited in the presence of MEN1. In neurons, phosphorylates SYT4 which captures neuronal dense core vesicles at synapses. Phosphorylates EIF4ENIF1/4-ET in response to oxidative stress, promoting P-body assembly. Phosphorylates SIRT6 in response to oxidative stress, stimulating its mono-ADP-ribosyltransferase activity. Phosphorylates NLRP3, promoting assembly of the NLRP3 inflammasome. Phosphorylates ALKBH5 in response to reactive oxygen species (ROS), promoting ALKBH5 sumoylation and inactivation. Functionally, JNK1 isoforms display different binding patterns: beta-1 preferentially binds to c-Jun, whereas alpha-1, alpha-2, and beta-2 have a similar low level of binding to both c-Jun or ATF2. However, there is no correlation between binding and phosphorylation, which is achieved at about the same efficiency by all isoforms. The polypeptide is Mitogen-activated protein kinase 8 (MAPK8) (Homo sapiens (Human)).